Consider the following 281-residue polypeptide: Pantothenate synthetase (281 aa).

Position 30-37 (30-37 (MGALHAGH)) interacts with ATP. H37 serves as the catalytic Proton donor. Residue Q64 coordinates (R)-pantoate. Q64 contributes to the beta-alanine binding site. Residue 150–153 (GKKD) participates in ATP binding. (R)-pantoate is bound at residue Q156. ATP-binding positions include V179 and 187–190 (YSSR).

Belongs to the pantothenate synthetase family. In terms of assembly, homodimer.

The protein resides in the cytoplasm. It catalyses the reaction (R)-pantoate + beta-alanine + ATP = (R)-pantothenate + AMP + diphosphate + H(+). Its pathway is cofactor biosynthesis; (R)-pantothenate biosynthesis; (R)-pantothenate from (R)-pantoate and beta-alanine: step 1/1. Catalyzes the condensation of pantoate with beta-alanine in an ATP-dependent reaction via a pantoyl-adenylate intermediate. The chain is Pantothenate synthetase from Akkermansia muciniphila (strain ATCC BAA-835 / DSM 22959 / JCM 33894 / BCRC 81048 / CCUG 64013 / CIP 107961 / Muc).